We begin with the raw amino-acid sequence, 63 residues long: Large ribosomal subunit protein uL29 (63 aa).

The protein belongs to the universal ribosomal protein uL29 family.

The polypeptide is Large ribosomal subunit protein uL29 (Azotobacter vinelandii (strain DJ / ATCC BAA-1303)).